Reading from the N-terminus, the 412-residue chain is Glutamate dehydrogenase (412 aa).

The active site involves Lys-102.

Belongs to the Glu/Leu/Phe/Val dehydrogenases family. In roots, stems, leaves and flowers but not in fruits.

Its subcellular location is the mitochondrion matrix. The enzyme catalyses L-glutamate + NAD(+) + H2O = 2-oxoglutarate + NH4(+) + NADH + H(+). It catalyses the reaction L-glutamate + NADP(+) + H2O = 2-oxoglutarate + NH4(+) + NADPH + H(+). In Solanum lycopersicum (Tomato), this protein is Glutamate dehydrogenase (GDH1).